The sequence spans 228 residues: Phosphoribosylformylglycinamidine synthase subunit PurQ (228 aa).

The Glutamine amidotransferase type-1 domain maps to 4-226; the sequence is AVVVFPGSNC…VNYWRETHVV (223 aa). Residue C86 is the Nucleophile of the active site. Catalysis depends on residues H195 and E197.

Part of the FGAM synthase complex composed of 1 PurL, 1 PurQ and 2 PurS subunits.

Its subcellular location is the cytoplasm. It carries out the reaction N(2)-formyl-N(1)-(5-phospho-beta-D-ribosyl)glycinamide + L-glutamine + ATP + H2O = 2-formamido-N(1)-(5-O-phospho-beta-D-ribosyl)acetamidine + L-glutamate + ADP + phosphate + H(+). The catalysed reaction is L-glutamine + H2O = L-glutamate + NH4(+). It functions in the pathway purine metabolism; IMP biosynthesis via de novo pathway; 5-amino-1-(5-phospho-D-ribosyl)imidazole from N(2)-formyl-N(1)-(5-phospho-D-ribosyl)glycinamide: step 1/2. Its function is as follows. Part of the phosphoribosylformylglycinamidine synthase complex involved in the purines biosynthetic pathway. Catalyzes the ATP-dependent conversion of formylglycinamide ribonucleotide (FGAR) and glutamine to yield formylglycinamidine ribonucleotide (FGAM) and glutamate. The FGAM synthase complex is composed of three subunits. PurQ produces an ammonia molecule by converting glutamine to glutamate. PurL transfers the ammonia molecule to FGAR to form FGAM in an ATP-dependent manner. PurS interacts with PurQ and PurL and is thought to assist in the transfer of the ammonia molecule from PurQ to PurL. This is Phosphoribosylformylglycinamidine synthase subunit PurQ from Geobacillus kaustophilus (strain HTA426).